Consider the following 807-residue polypeptide: DNA gyrase subunit B (807 aa).

Residues 429-543 form the Toprim domain; it reads SELFIVEGDS…KGYLYIAQPP (115 aa). The Mg(2+) site is built by glutamate 435, aspartate 508, and aspartate 510.

The protein belongs to the type II topoisomerase GyrB family. Heterotetramer, composed of two GyrA and two GyrB chains. In the heterotetramer, GyrA contains the active site tyrosine that forms a transient covalent intermediate with DNA, while GyrB binds cofactors and catalyzes ATP hydrolysis. The cofactor is Mg(2+). Mn(2+) serves as cofactor. It depends on Ca(2+) as a cofactor.

The protein resides in the cytoplasm. The enzyme catalyses ATP-dependent breakage, passage and rejoining of double-stranded DNA.. Functionally, a type II topoisomerase that negatively supercoils closed circular double-stranded (ds) DNA in an ATP-dependent manner to modulate DNA topology and maintain chromosomes in an underwound state. Negative supercoiling favors strand separation, and DNA replication, transcription, recombination and repair, all of which involve strand separation. Also able to catalyze the interconversion of other topological isomers of dsDNA rings, including catenanes and knotted rings. Type II topoisomerases break and join 2 DNA strands simultaneously in an ATP-dependent manner. This chain is DNA gyrase subunit B, found in Rickettsia prowazekii (strain Madrid E).